The following is a 286-amino-acid chain: 4-diphosphocytidyl-2-C-methyl-D-erythritol kinase (286 aa).

Residue lysine 10 is part of the active site. 94–104 (PVAAGLAGGSS) is a binding site for ATP. Aspartate 136 is an active-site residue.

Belongs to the GHMP kinase family. IspE subfamily.

The catalysed reaction is 4-CDP-2-C-methyl-D-erythritol + ATP = 4-CDP-2-C-methyl-D-erythritol 2-phosphate + ADP + H(+). It functions in the pathway isoprenoid biosynthesis; isopentenyl diphosphate biosynthesis via DXP pathway; isopentenyl diphosphate from 1-deoxy-D-xylulose 5-phosphate: step 3/6. Its function is as follows. Catalyzes the phosphorylation of the position 2 hydroxy group of 4-diphosphocytidyl-2C-methyl-D-erythritol. The protein is 4-diphosphocytidyl-2-C-methyl-D-erythritol kinase of Exiguobacterium sibiricum (strain DSM 17290 / CCUG 55495 / CIP 109462 / JCM 13490 / 255-15).